The following is a 487-amino-acid chain: Keratin, type I cytoskeletal 12 (487 aa).

The tract at residues 1–118 (MSLSVCTSAL…GNDGGLLSGS (118 aa)) is head. A coil 1A region spans residues 119-154 (EKETMQNLNDRLASYLGKVRSLEEANAELENKIREW). The region spanning 119 to 433 (EKETMQNLND…RLLEGDSQGD (315 aa)) is the IF rod domain. Residues 158-175 (RRTRDAGSQSDYSKYYPL) form a linker 1 region. The tract at residues 176-267 (IEDLKNKIVS…KNHEEELQSF (92 aa)) is coil 1B. Residues 268-290 (QAGGPGEVNVEMDAAPGVDLTKV) are linker 12. The tract at residues 291–428 (LNEMRAQYEA…IETYRRLLEG (138 aa)) is coil 2. The disordered stretch occupies residues 428-461 (GDSQGDGFDESSSLSVSKPQTPSVDSSKDPNKTR). The tract at residues 429–487 (DSQGDGFDESSSLSVSKPQTPSVDSSKDPNKTRKIKTVVQEIVNGEVVSSQVQELEEEM) is tail. The span at 437 to 452 (ESSSLSVSKPQTPSVD) shows a compositional bias: polar residues.

The protein belongs to the intermediate filament family. As to quaternary structure, heterotetramer of two type I and two type II keratins. Keratin-3 associates with keratin-12. In terms of tissue distribution, expressed in the corneal epithelium (at protein level). Also expressed in the suprabasal limbal epithelium of the cornea (at protein level).

Involved in corneal epithelium organization, integrity and corneal keratin expression. This chain is Keratin, type I cytoskeletal 12 (Krt12), found in Mus musculus (Mouse).